The following is a 480-amino-acid chain: MDFQSCLYAIAEELGSEDLAALKFLCLDYIPHKKQETIEDAQKLFLRLREKGMLEEGNLSFLKELLFHISRWDLLVNFLDCNREEMVRELRDPDNAQISPYRVMLFKLSEEVSELELRSFKFLLNNEIPKCKLEDDLSLLEIFVEMEKRTMLAENNLETLKSICDQVNKSLLGKIEDYERSSTERRMSLEGREELPPSVLDEMSLKMAELCDSPREQDSESRTSDKVYQMKNKPRGYCLIINNHDFSKAREDITQLRKMKDRKGTDCDKEALSKTFKELHFEIVSYDDCTANEIHEILEGYQSADHKNKDCFICCILSHGDKGVVYGTDGKEASIYDLTSYFTGSKCPSLSGKPKIFFIQACQGSNFQKGVPDEAGFEQQNHTLEVDSSSHKNYIPDEADFLLGMATVKNCVSYRDPVNGTWYIQSLCQSLRERCPQGDDILSILTGVNYDVSNKDDRRNKGKQMPQPTFTLRKKLFFPP.

A propeptide spanning residues 1 to 218 (MDFQSCLYAI…ELCDSPREQD (218 aa)) is cleaved from the precursor. 2 DED domains span residues 3-80 (FQSC…NFLD) and 101-177 (YRVM…KIED). Phosphoserine occurs at positions 188 and 213. At Lys226 the chain carries N6-acetyllysine. His319 is an active-site residue. Phosphotyrosine is present on Tyr336. Residue Cys362 is part of the active site. Positions 377 to 387 (FEQQNHTLEVD) are excised as a propeptide. At Ser389 the chain carries Phosphoserine; by CDK1.

It belongs to the peptidase C14A family. Heterotetramer that consists of two anti-parallel arranged heterodimers, each one formed by a 18 kDa (p18) and a 10 kDa (p10) subunit. Component of the death-induced signaling complex (DISC) composed of cell surface receptor FAS/CD95 or TNFRSF1A, adapter protein FADD and the CASP8 protease; recruitment of CASP8 to the complex is required for processing of CASP8 into the p18 and p10 subunits. Component of the AIM2 PANoptosome complex, a multiprotein complex that drives inflammatory cell death (PANoptosis). Interacts with CFLAR and PEA15. Interacts with RFFL and RNF34; negatively regulate CASP8 through proteasomal degradation. Interacts with TNFAIP8L2. Interacts with CASP8AP2. Interacts with NOL3; decreases CASP8 activity in a mitochondria localization- and phosphorylation-dependent manner and this interaction is dissociated by calcium. Interacts with UBR2. Interacts with RIPK1. Interacts with stimulated TNFRSF10B; this interaction is followed by CASP8 proteolytic cleavage and activation. Post-translationally, generation of the subunits requires association with the death-inducing signaling complex (DISC), whereas additional processing is likely due to the autocatalytic activity of the activated protease. GZMB and CASP10 can be involved in these processing events. In terms of processing, (Microbial infection) Proteolytically cleaved by the cowpox virus CRMA death inhibitory protein. Phosphorylation on Ser-389 during mitosis by CDK1 inhibits activation by proteolysis and prevents apoptosis. This phosphorylation occurs in cancer cell lines, as well as in primary breast tissues and lymphocytes. As to expression, expressed in a wide variety of tissues. Highest expression in spleen, thymus, lung, liver and kidney. Lower expression in heart, brain, testis and skeletal muscle.

The protein localises to the cytoplasm. It localises to the nucleus. The catalysed reaction is Strict requirement for Asp at position P1 and has a preferred cleavage sequence of (Leu/Asp/Val)-Glu-Thr-Asp-|-(Gly/Ser/Ala).. With respect to regulation, CASP8 activity is restricted by RIPK1. Its activity is regulated as follows. (Microbial infection) Inhibited by baculovirus p35 protein P35. Its function is as follows. Thiol protease that plays a key role in programmed cell death by acting as a molecular switch for apoptosis, necroptosis and pyroptosis, and is required to prevent tissue damage during embryonic development and adulthood. Initiator protease that induces extrinsic apoptosis by mediating cleavage and activation of effector caspases responsible for FAS/CD95-mediated and TNFRSF1A-induced cell death. Cleaves and activates effector caspases CASP3, CASP4, CASP6, CASP7, CASP9 and CASP10. Binding to the adapter molecule FADD recruits it to either receptor FAS/CD95 or TNFRSF1A. The resulting aggregate called the death-inducing signaling complex (DISC) performs CASP8 proteolytic activation. The active dimeric enzyme is then liberated from the DISC and free to activate downstream apoptotic proteases. Proteolytic fragments of the N-terminal propeptide (termed CAP3, CAP5 and CAP6) are likely retained in the DISC. In addition to extrinsic apoptosis, also acts as a negative regulator of necroptosis: acts by cleaving RIPK1 at 'Asp-325', which is crucial to inhibit RIPK1 kinase activity, limiting TNF-induced apoptosis, necroptosis and inflammatory response. Also able to initiate pyroptosis by mediating cleavage and activation of gasdermin-C and -D (GSDMC and GSDMD, respectively): gasdermin cleavage promotes release of the N-terminal moiety that binds to membranes and forms pores, triggering pyroptosis. Initiates pyroptosis following inactivation of MAP3K7/TAK1. Also acts as a regulator of innate immunity by mediating cleavage and inactivation of N4BP1 downstream of TLR3 or TLR4, thereby promoting cytokine production. May participate in the Granzyme B (GZMB) cell death pathways. Cleaves PARP1 and PARP2. The chain is Caspase-8 from Mus musculus (Mouse).